The sequence spans 421 residues: Large ribosomal subunit protein uL4 (421 aa).

Position 2 is an N-acetylalanine (alanine 2). Lysine 14 is subject to N6-acetyllysine. Arginine 97 carries the omega-N-methylarginine modification. Lysine 106 carries the N6-acetyllysine modification. A Glycyl lysine isopeptide (Lys-Gly) (interchain with G-Cter in SUMO2) cross-link involves residue lysine 239. Lysine 259 is subject to N6-acetyllysine. At threonine 266 the chain carries Phosphothreonine. A phosphoserine mark is found at serine 290 and serine 295. Residue arginine 300 is modified to Citrulline. Lysine 327 is covalently cross-linked (Glycyl lysine isopeptide (Lys-Gly) (interchain with G-Cter in SUMO2)). An N6-acetyllysine mark is found at lysine 333 and lysine 353. Residue lysine 364 is modified to N6-acetyllysine; alternate. Residue lysine 364 forms a Glycyl lysine isopeptide (Lys-Gly) (interchain with G-Cter in SUMO1); alternate linkage. Serine 365 is subject to Phosphoserine. Basic and acidic residues predominate over residues 365–379; the sequence is SEKIVPEKGAGDKKP. Residues 365–421 are disordered; sequence SEKIVPEKGAGDKKPAVGKKGKKPVDAKKLKKPAGKKVVTKKPAEKKPTTEEKKSAA. Residues 393–404 are compositionally biased toward basic residues; the sequence is KLKKPAGKKVVT. The segment covering 406–421 has biased composition (basic and acidic residues); the sequence is KPAEKKPTTEEKKSAA.

This sequence belongs to the universal ribosomal protein uL4 family. In terms of assembly, component of the large ribosomal subunit. May bind IPO9 with low affinity. Interacts with RBM3. In terms of processing, citrullinated by PADI4.

The protein localises to the cytoplasm. In terms of biological role, component of the large ribosomal subunit. The ribosome is a large ribonucleoprotein complex responsible for the synthesis of proteins in the cell. The protein is Large ribosomal subunit protein uL4 (Rpl4) of Rattus norvegicus (Rat).